A 489-amino-acid chain; its full sequence is Membrane-bound lytic murein transglycosylase F (489 aa).

A signal peptide spans 1–32; it reads MFALTAYRLRCAAWLLATGIFLLLAGCSEAKA. The segment at 33–268 is non-LT domain; it reads PTALERVQKE…RLKDRYYGHV (236 aa). The tract at residues 269–489 is LT domain; that stretch reads DVLGYVGAYT…PEEDSGDEKL (221 aa). The active site involves glutamate 315. Residues 466-489 are disordered; that stretch reads AESGLHLPGVNKTRPEEDSGDEKL. The segment covering 478–489 has biased composition (basic and acidic residues); the sequence is TRPEEDSGDEKL.

The protein in the N-terminal section; belongs to the bacterial solute-binding protein 3 family. This sequence in the C-terminal section; belongs to the transglycosylase Slt family.

Its subcellular location is the cell outer membrane. It carries out the reaction Exolytic cleavage of the (1-&gt;4)-beta-glycosidic linkage between N-acetylmuramic acid (MurNAc) and N-acetylglucosamine (GlcNAc) residues in peptidoglycan, from either the reducing or the non-reducing ends of the peptidoglycan chains, with concomitant formation of a 1,6-anhydrobond in the MurNAc residue.. Functionally, murein-degrading enzyme that degrades murein glycan strands and insoluble, high-molecular weight murein sacculi, with the concomitant formation of a 1,6-anhydromuramoyl product. Lytic transglycosylases (LTs) play an integral role in the metabolism of the peptidoglycan (PG) sacculus. Their lytic action creates space within the PG sacculus to allow for its expansion as well as for the insertion of various structures such as secretion systems and flagella. This chain is Membrane-bound lytic murein transglycosylase F, found in Pseudomonas aeruginosa (strain UCBPP-PA14).